The following is a 172-amino-acid chain: Envelope protein UL45 (172 aa).

The Intravirion portion of the chain corresponds to methionine 1 to alanine 27. A helical; Signal-anchor for type II membrane protein membrane pass occupies residues alanine 28 to valine 48. The Virion surface segment spans residues proline 49–proline 172.

The protein belongs to the herpesviridae HHV-1 UL45 family.

The protein localises to the virion membrane. In terms of biological role, important virulence factor of HSV neurotropism. Seems to be required for glycoprotein B-induced fusion. Dispensable for growth in vitro. The polypeptide is Envelope protein UL45 (Homo sapiens (Human)).